Reading from the N-terminus, the 59-residue chain is uncharacterized protein (59 aa).

ATP is bound at residue 33–40 (GRRRVGKT).

This is an uncharacterized protein from Methanocaldococcus jannaschii (strain ATCC 43067 / DSM 2661 / JAL-1 / JCM 10045 / NBRC 100440) (Methanococcus jannaschii).